The sequence spans 1657 residues: Androglobin (1657 aa).

Positions 1–11 are enriched in basic residues; that stretch reads MASKQAKRKEV. 2 disordered regions span residues 1–40 and 321–398; these read MASKQAKRKEVHRINSAHGSDKSKDLYHFGSNVPPGSFEQ and TKEN…SSDV. One can recognise a Calpain catalytic domain in the interval 70–402; it reads KDKTAKSPIF…RPSSDVQYSM (333 aa). Residues 321–386 are compositionally biased toward basic and acidic residues; sequence TKENKDGKDG…DGEKEKEKFK (66 aa). The region spanning 762–889 is the Globin; C-terminal part domain; it reads HVCSMTTFVI…EDVSLAEWVD (128 aa). Heme b-binding residues include Gln-791 and His-823. One can recognise an IQ domain in the interval 905 to 934; it reads EIAAAVKIQSMWKGCYVRLLMKARKPETKE. Residues 935 to 967 enclose the Globin; N-terminal part domain; sequence NVTVADTLQKIWAVLEMNLEQYALSLLRLMFKS. Disordered stretches follow at residues 1184 to 1226, 1288 to 1356, 1422 to 1459, and 1638 to 1657; these read SKQV…TDTG, KHEE…QEDP, TTDTTTSAPSPETLSVSQSQTKSSEEGELDTGKYADIK, and IEKKSPASDSQKKKKVGKKK. Basic and acidic residues predominate over residues 1321 to 1336; sequence EKSAEKEKLAKEKQAP. 2 stretches are compositionally biased toward polar residues: residues 1341-1351 and 1422-1443; these read QQVQMPTAVHS and TTDTTTSAPSPETLSVSQSQTK. Positions 1585 to 1640 form a coiled coil; that stretch reads DEVLEMYGEMRDSVDEARQKILDIREVYRNKLLEAERLRMEALAAQEAAVKIEIEK.

In the central section; belongs to the globin family. This sequence in the N-terminal section; belongs to the peptidase C2 family. As to quaternary structure, interacts with septin SEPT10; contributes to in vitro proteolytic cleavage of SEPT10 in a calmodulin-dependent manner. Interacts with CFAP69. Interacts with SPEF2. May interact with calmodulin. In terms of tissue distribution, strongly expressed in testis and lung. Weakly expressed in heart, brain, spleen, kidney and tongue.

It is found in the cell projection. Its subcellular location is the cilium. The protein localises to the flagellum. Functionally, probable chimeric globin with a bis-histidyl six-coordinate heme-iron atom through which it could bind dioxygen, carbon monoxide and nitric oxide. Required for sperm flagellum formation and maturation of elongating spermatids, thus playing an essential role in male fertility. The polypeptide is Androglobin (Mus musculus (Mouse)).